The chain runs to 435 residues: ATP-dependent protease ATPase subunit HslU (435 aa).

Residues V18, 60–65 (GVGKTE), D248, E313, and R385 contribute to the ATP site.

This sequence belongs to the ClpX chaperone family. HslU subfamily. A double ring-shaped homohexamer of HslV is capped on each side by a ring-shaped HslU homohexamer. The assembly of the HslU/HslV complex is dependent on binding of ATP.

It localises to the cytoplasm. ATPase subunit of a proteasome-like degradation complex; this subunit has chaperone activity. The binding of ATP and its subsequent hydrolysis by HslU are essential for unfolding of protein substrates subsequently hydrolyzed by HslV. HslU recognizes the N-terminal part of its protein substrates and unfolds these before they are guided to HslV for hydrolysis. This Azorhizobium caulinodans (strain ATCC 43989 / DSM 5975 / JCM 20966 / LMG 6465 / NBRC 14845 / NCIMB 13405 / ORS 571) protein is ATP-dependent protease ATPase subunit HslU.